A 241-amino-acid polypeptide reads, in one-letter code: MEAAADGPAETQSPVQKDSPAKTQSPAQDTSIMSRNNADTGRVLALPEHKKKRKGNLPAESVKILRDWMYKHRFKAYPSEEEKQMLSEKTNLSLLQISNWFINARRRILPDMLQQHRNDPIIGHKTGKGAHATHLQSTEASVPAKSGPSGPDNVQSLPLWPLPKGQMSREKQPDPESAPSQKLTGIAQPKKKVKVSITSPSSPELVSPEEYADFSSFLLLVDAAVQRAAELELEKKQEPNP.

Disordered stretches follow at residues 1-58 (MEAA…GNLP) and 127-207 (GKGA…ELVS). The span at 10-39 (ETQSPVQKDSPAKTQSPAQDTSIMSRNNAD) shows a compositional bias: polar residues. Positions 48-111 (EHKKKRKGNL…INARRRILPD (64 aa)) form a DNA-binding region, homeobox; TALE-type.

This sequence belongs to the TALE/TGIF homeobox family.

It localises to the nucleus. In terms of biological role, may have a transcription role in testis. The protein is Homeobox protein TGIF2LX (TGIF2LX) of Pan paniscus (Pygmy chimpanzee).